A 261-amino-acid chain; its full sequence is Global transcriptional regulator CodY (261 aa).

A GAF domain region spans residues Met-1 to Leu-159. Positions Ala-207–Arg-226 form a DNA-binding region, H-T-H motif.

This sequence belongs to the CodY family.

The protein localises to the cytoplasm. Its function is as follows. DNA-binding global transcriptional regulator which is involved in the adaptive response to starvation and acts by directly or indirectly controlling the expression of numerous genes in response to nutrient availability. During rapid exponential growth, CodY is highly active and represses genes whose products allow adaptation to nutrient depletion. This chain is Global transcriptional regulator CodY, found in Streptococcus agalactiae serotype III (strain NEM316).